The primary structure comprises 322 residues: Pilin gene-inverting protein (322 aa).

May be the site-specific invertase required for pilin gene inversion. Moraxella can express either a Q or I pilin; the inversion of 2 kb of DNA determines which pilin is expressed. The protein is Pilin gene-inverting protein (piv) of Moraxella lacunata.